Reading from the N-terminus, the 387-residue chain is Protein RecA (387 aa).

Position 78–85 (78–85 (GPESSGKT)) interacts with ATP. Residues 350-369 (QTREVKSIERDPKETKETKS) show a composition bias toward basic and acidic residues. Positions 350 to 387 (QTREVKSIERDPKETKETKSKQPVSFSTEAEVDIAVGE) are disordered.

It belongs to the RecA family.

It is found in the cytoplasm. Its function is as follows. Can catalyze the hydrolysis of ATP in the presence of single-stranded DNA, the ATP-dependent uptake of single-stranded DNA by duplex DNA, and the ATP-dependent hybridization of homologous single-stranded DNAs. It interacts with LexA causing its activation and leading to its autocatalytic cleavage. In Leptospira meyeri, this protein is Protein RecA.